A 230-amino-acid polypeptide reads, in one-letter code: Probable methylthioribulose-1-phosphate dehydratase (230 aa).

Position 87 (Cys87) interacts with substrate. Residues His105 and His107 each contribute to the Zn(2+) site. Glu129 serves as the catalytic Proton donor/acceptor. Residue His185 coordinates Zn(2+).

Belongs to the aldolase class II family. MtnB subfamily. Requires Zn(2+) as cofactor.

The protein resides in the cytoplasm. The catalysed reaction is 5-(methylsulfanyl)-D-ribulose 1-phosphate = 5-methylsulfanyl-2,3-dioxopentyl phosphate + H2O. It participates in amino-acid biosynthesis; L-methionine biosynthesis via salvage pathway; L-methionine from S-methyl-5-thio-alpha-D-ribose 1-phosphate: step 2/6. Its function is as follows. Catalyzes the dehydration of methylthioribulose-1-phosphate (MTRu-1-P) into 2,3-diketo-5-methylthiopentyl-1-phosphate (DK-MTP-1-P). The sequence is that of Probable methylthioribulose-1-phosphate dehydratase from Drosophila grimshawi (Hawaiian fruit fly).